Reading from the N-terminus, the 573-residue chain is F-box/WD repeat-containing protein 5 (573 aa).

Positions 3–49 (EGGLPLLPDSLVYQIFLSLGPADVLAAGLVCRQWQAVSRDEFLWKEQ) constitute an F-box domain. A WD 1 repeat occupies 90–129 (EHTDQVLHLSFSHSGYQFASCSKDCTVKIWNNDLTISLLH). Serine 151 carries the phosphoserine; by PLK4 modification. The short motif at 308–316 (RRVFDSVLD) is the D-box element. WD repeat units follow at residues 470–509 (TPNDECFFIFLDVSRDFVASGAEDRHGYIWDRHYNICLAK) and 511–551 (RHED…RVLQ).

Belongs to the FBXW5 family. As to quaternary structure, part of the SCF (SKP1-CUL1-F-box) E3 ubiquitin-protein ligase complex SCF(FBXW5) composed of CUL1, SKP1, RBX1 and FBXW5. Component of the DCX(FBXW5) E3 ubiquitin ligase complex, at least composed of (CUL4A or CUL4B), DDB1, FBXW5 and RBX1. Interacts with CDC20, TSC1, TSC2 and SASS6. Interacts with EPS8. Interacts with TNFAIP8L1; TNFAIP8L1 competes with TSC2 to bind FBXW5 increasing TSC2 stability by preventing its ubiquitination. In terms of processing, phosphorylated at Ser-151 by PLK4 during the G1/S transition, leading to inhibit its ability to ubiquitinate SASS6. Ubiquitinated and degraded by the APC/C complex during mitosis and G1 phase. As to expression, widely expressed in adult and embryonal tissues.

Its subcellular location is the cytoplasm. The protein operates within protein modification; protein ubiquitination. Substrate recognition component of both SCF (SKP1-CUL1-F-box protein) and DCX (DDB1-CUL4-X-box) E3 ubiquitin-protein ligase complexes. Substrate-specific adapter of the DCX(FBXW5) E3 ubiquitin-protein ligase complex which mediates the polyubiquitination and subsequent degradation of TSC2. May also act as a negative regulator of MAP3K7/TAK1 signaling in the interleukin-1B (IL1B) signaling pathway. Substrate recognition component of the SCF(FBXW5) E3 ubiquitin-protein ligase complex which mediates the ubiquitination and subsequent proteasomal degradation of SASS6 during S phase, leading to prevent centriole reduplication. The SCF(FBXW5) complex also mediates ubiquitination and degradation of actin-regulator EPS8 during G2 phase, leading to the transient degradation of EPS8 and subsequent cell shape changes required to allow mitotic progression. The chain is F-box/WD repeat-containing protein 5 (Fbxw5) from Mus musculus (Mouse).